The following is a 338-amino-acid chain: Protein FosB (338 aa).

4 disordered regions span residues 1–54 (MFQA…PGSF), 79–191 (MAQS…DQLE), 222–276 (CKIP…PPNL), and 316–338 (GAQR…LLAL). Polar residues-rich tracts occupy residues 13-31 (SRCS…SVDS) and 79-88 (MAQSQGQPLA). Ser27 is subject to Phosphoserine. Residues 113 to 124 (SSGGASGSGGPS) are compositionally biased toward gly residues. The segment covering 125–137 (TSGTTSGPGPARP) has biased composition (low complexity). The region spanning 155 to 218 (EEKRRVRRER…ERLEFVLVAH (64 aa)) is the bZIP domain. Residues 157-182 (KRRVRRERNKLAAAKCRNRRRELTDR) are basic motif. Residues 183–211 (LQAETDQLEEEKAELESEIAELQKEKERL) are leucine-zipper. Over residues 256–265 (LPPPPPPPLP) the composition is skewed to pro residues. Polar residues-rich tracts occupy residues 266 to 276 (FQTSQDAPPNL) and 318 to 338 (QRTS…LLAL).

Belongs to the bZIP family. Fos subfamily. In terms of assembly, heterodimer; binds to DNA as heterodimer. Component of an AP-1 transcription factor complex; composed of FOS-JUN heterodimers. As part of the AP-1 transcription factor complex, forms heterodimers with JUN, JUNB or JUND, thereby binding to the AP-1 consensus sequence and stimulating transcription. Interacts with the BAF multiprotein chromatin-remodeling complex subunits SMARCB1 and SMARCD1. Interacts with ARID1A and JUN. Homodimer under oxidizing conditions and monomer under reducing conditions (in vitro). Heterodimer; binds to DNA as heterodimer. Forms heterodimers with JUNB, JUN or JUND; thereby binding to the AP-1 consensus sequence but does not stimulate transcription. Forms heterodimers with JUND under oxidizing conditions. Post-translationally, phosphorylated. Phosphorylated at Ser-27 by CSNK2A1; phosphorylation increases protein stability and transactivation potential. As to expression, expressed in the nucleus accumbens of the striatum (at protein level).

It is found in the nucleus. Heterodimerizes with proteins of the JUN family to form an AP-1 transcription factor complex, thereby enhancing their DNA binding activity to gene promoters containing an AP-1 consensus sequence 5'-TGA[GC]TCA-3' and enhancing their transcriptional activity. As part of the AP-1 complex, facilitates enhancer selection together with cell-type-specific transcription factors by collaboratively binding to nucleosomal enhancers and recruiting the SWI/SNF (BAF) chromatin remodeling complex to establish accessible chromatin. Together with JUN, plays a role in activation-induced cell death of T cells by binding to the AP-1 promoter site of FASLG/CD95L, and inducing its transcription in response to activation of the TCR/CD3 signaling pathway. Exhibits transactivation activity in vitro. Involved in the display of nurturing behavior towards newborns. May play a role in neurogenesis in the hippocampus and in learning and memory-related tasks by regulating the expression of various genes involved in neurogenesis, depression and epilepsy. Implicated in behavioral responses related to morphine reward and spatial memory. In terms of biological role, exhibits lower transactivation activity than isoform 1 in vitro. The heterodimer with JUN does not display any transcriptional activity, and may thereby act as an transcriptional inhibitor. May be involved in the regulation of neurogenesis in the hippocampus. May play a role in synaptic modifications in nucleus accumbens medium spiny neurons and thereby play a role in adaptive and pathological reward-dependent learning, including maladaptive responses involved in drug addiction. Seems to be more stably expressed with a half-life of ~9.5 hours in cell culture as compared to 1.5 hours half-life of isoform 1. The protein is Protein FosB (FOSB) of Homo sapiens (Human).